Reading from the N-terminus, the 345-residue chain is L-threonine 3-dehydrogenase (345 aa).

Cys38 is a Zn(2+) binding site. Residues Thr40 and His43 each act as charge relay system in the active site. The Zn(2+) site is built by His63, Glu64, Cys93, Cys96, Cys99, and Cys107. Residues Ile176, Asp196, Arg201, 263 to 265 (LGT), and 287 to 288 (VT) each bind NAD(+).

The protein belongs to the zinc-containing alcohol dehydrogenase family. In terms of assembly, homotetramer. It depends on Zn(2+) as a cofactor.

It is found in the cytoplasm. It catalyses the reaction L-threonine + NAD(+) = (2S)-2-amino-3-oxobutanoate + NADH + H(+). It functions in the pathway amino-acid degradation; L-threonine degradation via oxydo-reductase pathway; glycine from L-threonine: step 1/2. Catalyzes the NAD(+)-dependent oxidation of L-threonine to 2-amino-3-ketobutyrate. This is L-threonine 3-dehydrogenase from Cutibacterium acnes (strain DSM 16379 / KPA171202) (Propionibacterium acnes).